The following is a 715-amino-acid chain: Polyribonucleotide nucleotidyltransferase (715 aa).

Mg(2+) is bound by residues Asp-487 and Asp-493. Positions 554-613 (PRLYTFKINPEKIRDVIGKGGAVIRALTEETGTTIDIQDDGTITIAATSGEAAAAARSRI) constitute a KH domain. Positions 623-691 (GKIYEGTVLK…DRGRVKLSMK (69 aa)) constitute an S1 motif domain.

The protein belongs to the polyribonucleotide nucleotidyltransferase family. Mg(2+) is required as a cofactor.

Its subcellular location is the cytoplasm. It catalyses the reaction RNA(n+1) + phosphate = RNA(n) + a ribonucleoside 5'-diphosphate. Its function is as follows. Involved in mRNA degradation. Catalyzes the phosphorolysis of single-stranded polyribonucleotides processively in the 3'- to 5'-direction. The chain is Polyribonucleotide nucleotidyltransferase from Dechloromonas aromatica (strain RCB).